The primary structure comprises 135 residues: Fatty acid-binding protein 5 (135 aa).

An N-acetylalanine modification is found at alanine 2. Residue lysine 17 is modified to N6-acetyllysine. The short motif at 24-34 (KELGVGIALRK) is the Nuclear localization signal element. Residues cysteine 43 and arginine 109 each contribute to the N-eicosanoyl ethanolamine site. A disulfide bond links cysteine 120 and cysteine 127. (9Z,12Z)-octadecadienoate is bound at residue 129–131 (RIY). Tyrosine 131 contacts N-eicosanoyl ethanolamine. Tyrosine 131 contributes to the hexadecanoate binding site. Residue tyrosine 131 is modified to Phosphotyrosine.

It belongs to the calycin superfamily. Fatty-acid binding protein (FABP) family. As to quaternary structure, monomer. Homodimer. Keratinocytes; highly expressed in psoriatic skin. Expressed in brain gray matter.

Its subcellular location is the cytoplasm. It localises to the nucleus. The protein resides in the synapse. It is found in the postsynaptic density. The protein localises to the secreted. The enzyme catalyses hexadecanoate(out) = hexadecanoate(in). The catalysed reaction is (9Z,12Z)-octadecadienoate(out) = (9Z,12Z)-octadecadienoate(in). It catalyses the reaction (9Z)-octadecenoate(out) = (9Z)-octadecenoate(in). In terms of biological role, intracellular carrier for long-chain fatty acids and related active lipids, such as endocannabinoids, that regulate the metabolism and actions of the ligands they bind. In addition to the cytosolic transport, selectively delivers specific fatty acids from the cytosol to the nucleus, wherein they activate nuclear receptors. Delivers retinoic acid to the nuclear receptor peroxisome proliferator-activated receptor delta; which promotes proliferation and survival. May also serve as a synaptic carrier of endocannabinoid at central synapses and thus controls retrograde endocannabinoid signaling. Modulates inflammation by regulating PTGES induction via NF-kappa-B activation, and prostaglandin E2 (PGE2) biosynthesis during inflammation. May be involved in keratinocyte differentiation. The protein is Fatty acid-binding protein 5 of Homo sapiens (Human).